A 362-amino-acid polypeptide reads, in one-letter code: Cobalt-precorrin-5B C(1)-methyltransferase (362 aa).

It belongs to the CbiD family.

The catalysed reaction is Co-precorrin-5B + S-adenosyl-L-methionine = Co-precorrin-6A + S-adenosyl-L-homocysteine. It functions in the pathway cofactor biosynthesis; adenosylcobalamin biosynthesis; cob(II)yrinate a,c-diamide from sirohydrochlorin (anaerobic route): step 6/10. Functionally, catalyzes the methylation of C-1 in cobalt-precorrin-5B to form cobalt-precorrin-6A. This is Cobalt-precorrin-5B C(1)-methyltransferase from Desulfotalea psychrophila (strain LSv54 / DSM 12343).